A 199-amino-acid chain; its full sequence is Ribosome maturation factor RimM (199 aa).

Residues 100-195 (ADEWYPKDLI…YLTLDPPGGL (96 aa)) enclose the PRC barrel domain.

The protein belongs to the RimM family. Binds ribosomal protein uS19.

The protein resides in the cytoplasm. An accessory protein needed during the final step in the assembly of 30S ribosomal subunit, possibly for assembly of the head region. Essential for efficient processing of 16S rRNA. May be needed both before and after RbfA during the maturation of 16S rRNA. It has affinity for free ribosomal 30S subunits but not for 70S ribosomes. This Bifidobacterium longum (strain DJO10A) protein is Ribosome maturation factor RimM.